A 422-amino-acid chain; its full sequence is Glutamyl-tRNA reductase (422 aa).

Substrate contacts are provided by residues 49-52 (TCNR), serine 107, 112-114 (EPQ), and glutamine 118. Cysteine 50 functions as the Nucleophile in the catalytic mechanism. NADP(+) is bound at residue 187–192 (GAGETI).

It belongs to the glutamyl-tRNA reductase family. Homodimer.

The catalysed reaction is (S)-4-amino-5-oxopentanoate + tRNA(Glu) + NADP(+) = L-glutamyl-tRNA(Glu) + NADPH + H(+). Its pathway is porphyrin-containing compound metabolism; protoporphyrin-IX biosynthesis; 5-aminolevulinate from L-glutamyl-tRNA(Glu): step 1/2. In terms of biological role, catalyzes the NADPH-dependent reduction of glutamyl-tRNA(Glu) to glutamate 1-semialdehyde (GSA). The sequence is that of Glutamyl-tRNA reductase from Stutzerimonas stutzeri (strain A1501) (Pseudomonas stutzeri).